A 370-amino-acid chain; its full sequence is CCA-adding enzyme (370 aa).

The ATP site is built by glycine 8 and arginine 11. Glycine 8 and arginine 11 together coordinate CTP. Positions 21 and 23 each coordinate Mg(2+). ATP is bound by residues arginine 91, arginine 137, and arginine 140. Arginine 91, arginine 137, and arginine 140 together coordinate CTP.

It belongs to the tRNA nucleotidyltransferase/poly(A) polymerase family. Bacterial CCA-adding enzyme type 2 subfamily. It depends on Mg(2+) as a cofactor.

The catalysed reaction is a tRNA precursor + 2 CTP + ATP = a tRNA with a 3' CCA end + 3 diphosphate. The enzyme catalyses a tRNA with a 3' CCA end + 2 CTP + ATP = a tRNA with a 3' CCACCA end + 3 diphosphate. Functionally, catalyzes the addition and repair of the essential 3'-terminal CCA sequence in tRNAs without using a nucleic acid template. Adds these three nucleotides in the order of C, C, and A to the tRNA nucleotide-73, using CTP and ATP as substrates and producing inorganic pyrophosphate. tRNA 3'-terminal CCA addition is required both for tRNA processing and repair. Also involved in tRNA surveillance by mediating tandem CCA addition to generate a CCACCA at the 3' terminus of unstable tRNAs. While stable tRNAs receive only 3'-terminal CCA, unstable tRNAs are marked with CCACCA and rapidly degraded. This is CCA-adding enzyme from Pseudomonas putida (strain W619).